The sequence spans 96 residues: MSWFNYFRATRGNSARTAKERLQIVIAHERIDRSGPSYLPRLRGDIIEVIRKYIEIDEDQVKIQMEQEGDMDVLALNIQLPDASPPLSETRHSSKQ.

It belongs to the MinE family.

Prevents the cell division inhibition by proteins MinC and MinD at internal division sites while permitting inhibition at polar sites. This ensures cell division at the proper site by restricting the formation of a division septum at the midpoint of the long axis of the cell. This chain is Cell division topological specificity factor, found in Nitrosococcus oceani (strain ATCC 19707 / BCRC 17464 / JCM 30415 / NCIMB 11848 / C-107).